A 406-amino-acid polypeptide reads, in one-letter code: MALIIQKFGGTSVTTIDRIKKIIPIIKAEIAKNNQVIIVVSAMAGVTNQLVTLCNEVSSLNKSSQLAEYDVALSSGEIVTASLLALALQEENINARSFLAWQLPILTDDNHSKALVESVDTNLLNECLQQNIIPIIAGFQGINKHNRLATLGRGGSDTTAALIAAAMKADRCDIYTDVEGVFAADPRIIPKAKKIDEIDFSEMLELALSGAKVLHSRAAEIVMRYQIDMRILSTFAPEAGCTLITSKDKIMEKRIISGITSNKNLLYITIESSSLNFIQVASIIAQNNNHIEVMQEIEPNKRYSFITNLTDKNSLHILLTNLKNNNQISNFTFDTEIATVSIIGHGIKNDLKLLEVILSKLAKDNINVQMVQISEIKIILLINDKQVEKTVLDLYDLLKISETGHC.

Residues 342–406 (IIGHGIKNDL…LLKISETGHC (65 aa)) enclose the ACT domain.

It belongs to the aspartokinase family.

It carries out the reaction L-aspartate + ATP = 4-phospho-L-aspartate + ADP. It participates in amino-acid biosynthesis; L-lysine biosynthesis via DAP pathway; (S)-tetrahydrodipicolinate from L-aspartate: step 1/4. It functions in the pathway amino-acid biosynthesis; L-methionine biosynthesis via de novo pathway; L-homoserine from L-aspartate: step 1/3. Its pathway is amino-acid biosynthesis; L-threonine biosynthesis; L-threonine from L-aspartate: step 1/5. The protein is Aspartokinase (lysC) of Rickettsia bellii (strain RML369-C).